A 1242-amino-acid polypeptide reads, in one-letter code: Structural polyprotein (1242 aa).

The segment at 1-36 is necessary for nucleocapsid assembly and virus assembly; the sequence is MFPYPTLNYPPMAPVNPMAYRDPNPPRRRWRPFRPP. Residues 1–104 form a disordered region; that stretch reads MFPYPTLNYP…KQKPGKRQRM (104 aa). Positions 37–70 are host transcription inhibition; it reads LAAQIEDLRRSIANLTFKQRAPNPPAGPPAKRKK. Positions 44–51 match the Supraphysiological nuclear export signal motif; it reads LRRSIANL. The segment covering 66–104 has biased composition (basic residues); that stretch reads AKRKKPAPKPKPAAPKKKRQPPPAKKQKRKQKPGKRQRM. The short motif at 67–70 is the Nuclear localization signal element; that stretch reads KRKK. Residues 83–113 are binding to the viral RNA; the sequence is KRQPPPAKKQKRKQKPGKRQRMCMKLESDKT. The segment at 98-112 is ribosome-binding; it reads PGKRQRMCMKLESDK. Serine 110 is modified (phosphoserine). The region spanning 112-261 is the Peptidase S3 domain; it reads KTFPIMLNGQ…KDTPEGSEPW (150 aa). Position 113 is a phosphothreonine (threonine 113). Residues histidine 138, aspartate 160, and serine 212 each act as charge relay system in the active site. A functions as an uncleaved signal peptide for the precursor of protein E3/E2 region spans residues 262-273; sequence SLTTVMCVLANI. N-linked (GlcNAc...) asparagine; by host glycosylation occurs at asparagine 272. Residues 325–688 lie on the Extracellular side of the membrane; the sequence is DLETHFTQYK…YYYNRYPMTT (364 aa). The chain crosses the membrane as a helical span at residues 689–709; that stretch reads VIGLCTCVAIIMVSCVTSVWL. The Cytoplasmic segment spans residues 710–744; it reads LCRTRNLCITPYRLAPNAQVPILLAVLCCVKPTRA. S-palmitoyl cysteine; by host attachment occurs at residues cysteine 717, cysteine 737, and cysteine 738. Residues 717 to 737 are transient transmembrane before p62-6K protein processing; it reads CITPYRLAPNAQVPILLAVLC. The Extracellular portion of the chain corresponds to 745–759; sequence DDTLQVLNYLWNNNQ. 2 consecutive transmembrane segments (helical) span residues 760-780 and 781-801; these read NFFW…MRML and RCLL…GAAA. The Extracellular portion of the chain corresponds to 802–1218; that stretch reads YEHAAVMPNK…WSWLKVLVGS (417 aa). Disulfide bonds link cysteine 850–cysteine 915, cysteine 863–cysteine 895, cysteine 864–cysteine 897, cysteine 869–cysteine 879, cysteine 1061–cysteine 1073, cysteine 1103–cysteine 1178, cysteine 1108–cysteine 1182, and cysteine 1130–cysteine 1172. The E1 fusion peptide loop stretch occupies residues 885–902; it reads VYPFMWGGAYCFCDTENT. Residues 1219–1239 form a helical membrane-spanning segment; sequence TSAFIVLGLIATAVVALVLFT. Residues 1240-1242 lie on the Cytoplasmic side of the membrane; sequence HRH.

Part of a tetrameric complex composed of host CRM1, host importin alpha/beta dimer and the viral capsid; this complex blocks the receptor-mediated transport through the nuclear pore. Interacts with host phosphatase PPP1CA; this interaction dephosphorylates the capsid protein, which increases its ability to bind to the viral genome. Interacts with host karyopherin KPNA4; this interaction allows the nuclear import of the viral capsid protein. Interacts with spike glycoprotein E2. Interacts with host IRAK1; the interaction leads to inhibition of IRAK1-dependent signaling. In terms of assembly, the precursor of protein E3/E2 and E1 form a heterodimer shortly after synthesis. As to quaternary structure, the precursor of protein E3/E2 and E1 form a heterodimer shortly after synthesis. Processing of the precursor of protein E3/E2 into E2 and E3 results in a heterodimer of the spike glycoproteins E2 and E1. Spike at virion surface are constituted of three E2-E1 heterodimers. After target cell attachment and endocytosis, E1 change conformation to form homotrimers. Interacts with 6K protein. Processing of the precursor of protein E3/E2 into E2 and E3 results in a heterodimer of the spike glycoproteins E2 and E1. Spike at virion surface are constituted of three E2-E1 heterodimers. Interacts with 6K protein. In terms of assembly, interacts with spike glycoprotein E1. Interacts with spike glycoprotein E2. Structural polyprotein: Specific enzymatic cleavages in vivo yield mature proteins. Capsid protein is auto-cleaved during polyprotein translation, unmasking a signal peptide at the N-terminus of the precursor of E3/E2. The remaining polyprotein is then targeted to the host endoplasmic reticulum, where host signal peptidase cleaves it into pE2, 6K and E1 proteins. pE2 is further processed to mature E3 and E2 by host furin in trans-Golgi vesicle. In terms of processing, phosphorylated on serine and threonine residues. Post-translationally, palmitoylated via thioester bonds. These palmitoylations may induce disruption of the C-terminus transmembrane. This would result in the reorientation of E2 C-terminus from lumenal to cytoplasmic side. N-glycosylated. In terms of processing, palmitoylated via thioester bonds.

It is found in the virion. It localises to the host cytoplasm. The protein resides in the host cell membrane. Its subcellular location is the host nucleus. The protein localises to the virion membrane. The catalysed reaction is Autocatalytic release of the core protein from the N-terminus of the togavirus structural polyprotein by hydrolysis of a -Trp-|-Ser- bond.. Functionally, forms an icosahedral capsid with a T=4 symmetry composed of 240 copies of the capsid protein surrounded by a lipid membrane through which penetrate 80 spikes composed of trimers of E1-E2 heterodimers. The capsid protein binds to the viral RNA genome at a site adjacent to a ribosome binding site for viral genome translation following genome release. Possesses a protease activity that results in its autocatalytic cleavage from the nascent structural protein. Following its self-cleavage, the capsid protein transiently associates with ribosomes, and within several minutes the protein binds to viral RNA and rapidly assembles into icosahedric core particles. The resulting nucleocapsid eventually associates with the cytoplasmic domain of the spike glycoprotein E2 at the cell membrane, leading to budding and formation of mature virions. In case of infection, new virions attach to target cells and after clathrin-mediated endocytosis their membrane fuses with the host endosomal membrane. This leads to the release of the nucleocapsid into the cytoplasm, followed by an uncoating event necessary for the genomic RNA to become accessible. The uncoating might be triggered by the interaction of capsid proteins with ribosomes. Binding of ribosomes would release the genomic RNA since the same region is genomic RNA-binding and ribosome-binding. Specifically inhibits interleukin-1 receptor-associated kinase 1/IRAK1-dependent signaling during viral entry, representing a means by which the alphaviruses may evade innate immune detection and activation prior to viral gene expression. Inhibits host transcription. Forms a tetrameric complex with XPO1/CRM1 and the nuclear import receptor importin. This complex blocks the central channel of host nuclear pores thereby inhibiting the receptor-mediated nuclear transport and thus the host mRNA and rRNA transcription. The inhibition of transcription is linked to a cytopathic effect on the host cell. In terms of biological role, provides the signal sequence for the translocation of the precursor of protein E3/E2 to the host endoplasmic reticulum. Furin-cleaved E3 remains associated with spike glycoprotein E1 and mediates pH protection of the latter during the transport via the secretory pathway. After virion release from the host cell, the assembly protein E3 is gradually released in the extracellular space. Its function is as follows. Plays a role in viral attachment to target host cell, by binding to the cell receptor. Synthesized as a p62 precursor which is processed by furin at the cell membrane just before virion budding, giving rise to E2-E1 heterodimer. The p62-E1 heterodimer is stable, whereas E2-E1 is unstable and dissociate at low pH. p62 is processed at the last step, presumably to avoid E1 fusion activation before its final export to cell surface. E2 C-terminus contains a transitory transmembrane that would be disrupted by palmitoylation, resulting in reorientation of the C-terminal tail from lumenal to cytoplasmic side. This step is critical since E2 C-terminus is involved in budding by interacting with capsid proteins. This release of E2 C-terminus in cytoplasm occurs lately in protein export, and precludes premature assembly of particles at the endoplasmic reticulum membrane. Constitutive membrane protein involved in virus glycoprotein processing, cell permeabilization, and the budding of viral particles. Disrupts the calcium homeostasis of the cell, probably at the endoplasmic reticulum level. This leads to cytoplasmic calcium elevation. Because of its lipophilic properties, the 6K protein is postulated to influence the selection of lipids that interact with the transmembrane domains of the glycoproteins, which, in turn, affects the deformability of the bilayer required for the extreme curvature that occurs as budding proceeds. Present in low amount in virions, about 3% compared to viral glycoproteins. Functionally, class II viral fusion protein. Fusion activity is inactive as long as E1 is bound to E2 in mature virion. After virus attachment to target cell and endocytosis, acidification of the endosome would induce dissociation of E1/E2 heterodimer and concomitant trimerization of the E1 subunits. This E1 trimer is fusion active, and promotes release of viral nucleocapsid in cytoplasm after endosome and viral membrane fusion. Efficient fusion requires the presence of cholesterol and sphingolipid in the target membrane. Fusion is optimal at levels of about 1 molecule of cholesterol per 2 molecules of phospholipids, and is specific for sterols containing a 3-beta-hydroxyl group. This is Structural polyprotein from Aedes (Human).